The chain runs to 129 residues: uncharacterized protein (129 aa).

This is an uncharacterized protein from Saccharomyces cerevisiae (strain ATCC 204508 / S288c) (Baker's yeast).